The chain runs to 376 residues: Lipoyl synthase, mitochondrial (376 aa).

Positions 103, 108, 114, 134, 138, 141, and 349 each coordinate [4Fe-4S] cluster. The Radical SAM core domain maps to Glu119–Leu338.

It belongs to the radical SAM superfamily. Lipoyl synthase family. The cofactor is [4Fe-4S] cluster.

The protein localises to the mitochondrion. It carries out the reaction [[Fe-S] cluster scaffold protein carrying a second [4Fe-4S](2+) cluster] + N(6)-octanoyl-L-lysyl-[protein] + 2 oxidized [2Fe-2S]-[ferredoxin] + 2 S-adenosyl-L-methionine + 4 H(+) = [[Fe-S] cluster scaffold protein] + N(6)-[(R)-dihydrolipoyl]-L-lysyl-[protein] + 4 Fe(3+) + 2 hydrogen sulfide + 2 5'-deoxyadenosine + 2 L-methionine + 2 reduced [2Fe-2S]-[ferredoxin]. Its pathway is protein modification; protein lipoylation via endogenous pathway; protein N(6)-(lipoyl)lysine from octanoyl-[acyl-carrier-protein]: step 2/2. Catalyzes the radical-mediated insertion of two sulfur atoms into the C-6 and C-8 positions of the octanoyl moiety bound to the lipoyl domains of lipoate-dependent enzymes, thereby converting the octanoylated domains into lipoylated derivatives. In Drosophila ananassae (Fruit fly), this protein is Lipoyl synthase, mitochondrial.